Here is a 1124-residue protein sequence, read N- to C-terminus: EGF and laminin G domain-containing protein (1124 aa).

The Extracellular segment spans residues Arg-1–Thr-1055. 2 Laminin G-like domains span residues Ser-8–Cys-203 and Pro-210–Cys-369. Disulfide bonds link Cys-167–Cys-203, Cys-342–Cys-369, Cys-375–Cys-386, Cys-380–Cys-395, Cys-397–Cys-412, Cys-761–Cys-788, Cys-792–Cys-803, Cys-797–Cys-812, and Cys-814–Cys-824. Positions Ile-371–Gln-413 constitute an EGF-like 1 domain. Residues Asn-621–Cys-788 enclose the Laminin G-like 3 domain. In terms of domain architecture, EGF-like 2 spans Gly-789 to His-825. The interval Arg-1011–Leu-1047 is disordered. The span at Asp-1034 to Lys-1046 shows a compositional bias: polar residues. A helical transmembrane segment spans residues Ala-1056–Ile-1076. The Cytoplasmic portion of the chain corresponds to Tyr-1077–Ile-1124. Residues His-1090–Ile-1124 form a disordered region. Residues Leu-1111 to Ile-1124 are compositionally biased toward basic and acidic residues.

As to expression, component of the acid-insoluble organic matrix of the aragonitic skeleton (at protein level).

It is found in the membrane. The protein is EGF and laminin G domain-containing protein of Acropora millepora (Staghorn coral).